The following is a 71-amino-acid chain: Translation initiation factor IF-1 (71 aa).

The S1-like domain maps to methionine 1–arginine 71.

This sequence belongs to the IF-1 family. As to quaternary structure, component of the 30S ribosomal translation pre-initiation complex which assembles on the 30S ribosome in the order IF-2 and IF-3, IF-1 and N-formylmethionyl-tRNA(fMet); mRNA recruitment can occur at any time during PIC assembly.

Its subcellular location is the cytoplasm. In terms of biological role, one of the essential components for the initiation of protein synthesis. Stabilizes the binding of IF-2 and IF-3 on the 30S subunit to which N-formylmethionyl-tRNA(fMet) subsequently binds. Helps modulate mRNA selection, yielding the 30S pre-initiation complex (PIC). Upon addition of the 50S ribosomal subunit IF-1, IF-2 and IF-3 are released leaving the mature 70S translation initiation complex. The chain is Translation initiation factor IF-1 from Buchnera aphidicola subsp. Cinara cedri (strain Cc).